Reading from the N-terminus, the 2511-residue chain is Chromodomain-helicase-DNA-binding protein 8 (2511 aa).

The disordered stretch occupies residues 484-615 (PRVLNQDELP…RSNRQVKRKK (132 aa)). Residues 515-524 (GGGVGGGGGG) show a composition bias toward gly residues. Basic residues predominate over residues 604 to 615 (KRRSNRQVKRKK). 2 consecutive Chromo domains span residues 680-745 (AIVD…AQMR) and 760-826 (VEVD…RTPR). In terms of domain architecture, Helicase ATP-binding spans 859-1033 (LFNWYNRQNC…FSLLHFLEPA (175 aa)). Residue 872-879 (DEMGLGKT) participates in ATP binding. The DEAH box signature appears at 984-987 (DEAH). The 157-residue stretch at 1174 to 1330 (LLDKLLPRLK…SMSGNKESSI (157 aa)) folds into the Helicase C-terminal domain. 4 disordered regions span residues 1440 to 1482 (TRQF…HSGG), 1715 to 1736 (EQQA…SEDP), 2086 to 2168 (SKNN…LTDP), and 2468 to 2511 (PSAL…SSED). The segment covering 1452–1461 (DLSDLDSDDD) has biased composition (acidic residues). The segment covering 2111-2125 (DSGSSSSSRHSGSSD) has biased composition (low complexity).

Belongs to the SNF2/RAD54 helicase family. CHD8 subfamily. Component of some MLL1/MLL complex.

It localises to the nucleus. The catalysed reaction is ATP + H2O = ADP + phosphate + H(+). ATP-dependent chromatin-remodeling factor, it slides nucleosomes along DNA; nucleosome sliding requires ATP. Acts as a transcription repressor by remodeling chromatin structure and recruiting histone H1 to target genes. Suppresses p53/tp53-mediated apoptosis by recruiting histone H1 and preventing p53/tp53 transactivation activity. Acts as a negative regulator of Wnt signaling pathway by regulating beta-catenin (ctnnb1) activity. Negatively regulates ctnnb1-targeted gene expression by being recruited specifically to the promoter regions of several ctnnb1 responsive genes. May also act as a transcription activator by participating in efficient U6 RNA polymerase III transcription. The chain is Chromodomain-helicase-DNA-binding protein 8 from Danio rerio (Zebrafish).